We begin with the raw amino-acid sequence, 383 residues long: Chitinase-3-like protein 1 (383 aa).

The first 21 residues, 1-21 (MGLRVAQTGFVVLVLLQSCAA), serve as a signal peptide directing secretion. Positions 22 to 383 (YKLICYYTSW…NAIKDVLAGV (362 aa)) constitute a GH18 domain. An intrachain disulfide couples cysteine 26 to cysteine 51. Residue asparagine 60 is glycosylated (N-linked (GlcNAc...) asparagine). Chitin contacts are provided by residues 70–71 (EW), 97–100 (GGWN), tyrosine 141, 204–207 (LTYD), and lysine 263. Cysteine 300 and cysteine 364 form a disulfide bridge. The important for AKT1 activation and IL8 production stretch occupies residues 324 to 338 (QWVAYDDQESVKNKA). Residue tryptophan 352 participates in chitin binding.

Belongs to the glycosyl hydrolase 18 family. As to quaternary structure, monomer. As to expression, detected in mammary gland.

The protein resides in the secreted. Its subcellular location is the extracellular space. The protein localises to the cytoplasm. It is found in the perinuclear region. It localises to the endoplasmic reticulum. In terms of biological role, carbohydrate-binding lectin with a preference for chitin. Has no chitinase activity. May play a role in tissue remodeling and in the capacity of cells to respond to and cope with changes in their environment. Plays a role in T-helper cell type 2 (Th2) inflammatory response and IL-13-induced inflammation, regulating allergen sensitization, inflammatory cell apoptosis, dendritic cell accumulation and M2 macrophage differentiation. Facilitates invasion of pathogenic enteric bacteria into colonic mucosa and lymphoid organs. Mediates activation of AKT1 signaling pathway and subsequent IL8 production in colonic epithelial cells. Regulates antibacterial responses in lung by contributing to macrophage bacterial killing, controlling bacterial dissemination and augmenting host tolerance. Also regulates hyperoxia-induced injury, inflammation and epithelial apoptosis in lung. This is Chitinase-3-like protein 1 (CHI3L1) from Bubalus bubalis (Domestic water buffalo).